A 487-amino-acid chain; its full sequence is Probable Xaa-Pro aminopeptidase CPSG_02684 (487 aa).

Residues 1-10 (MAGSNTLSSS) show a composition bias toward polar residues. A disordered region spans residues 1–22 (MAGSNTLSSSEHGDDPRGHSYS). The Mn(2+) site is built by Asp-275, Asp-286, Glu-421, and Glu-460.

This sequence belongs to the peptidase M24B family. Mn(2+) serves as cofactor.

The enzyme catalyses Release of any N-terminal amino acid, including proline, that is linked to proline, even from a dipeptide or tripeptide.. Its function is as follows. Catalyzes the removal of a penultimate prolyl residue from the N-termini of peptides. The polypeptide is Probable Xaa-Pro aminopeptidase CPSG_02684 (Coccidioides posadasii (strain RMSCC 757 / Silveira) (Valley fever fungus)).